Reading from the N-terminus, the 350-residue chain is Glycerol-1-phosphate dehydrogenase [NAD(P)+] (350 aa).

Residues 94-98 and 116-119 each bind NAD(+); these read GKPID and TVAS. Asp-121 contributes to the substrate binding site. Residue Ser-125 participates in NAD(+) binding. A substrate-binding site is contributed by Asp-168. Asp-168 and His-248 together coordinate Zn(2+). Residue His-252 coordinates substrate. His-264 is a Zn(2+) binding site.

It belongs to the glycerol-1-phosphate dehydrogenase family. Zn(2+) is required as a cofactor.

The protein localises to the cytoplasm. The enzyme catalyses sn-glycerol 1-phosphate + NAD(+) = dihydroxyacetone phosphate + NADH + H(+). It catalyses the reaction sn-glycerol 1-phosphate + NADP(+) = dihydroxyacetone phosphate + NADPH + H(+). Its pathway is membrane lipid metabolism; glycerophospholipid metabolism. Functionally, catalyzes the NAD(P)H-dependent reduction of dihydroxyacetonephosphate (DHAP or glycerone phosphate) to glycerol 1-phosphate (G1P). The G1P thus generated is used as the glycerophosphate backbone of phospholipids in the cellular membranes of Archaea. The sequence is that of Glycerol-1-phosphate dehydrogenase [NAD(P)+] from Halorubrum lacusprofundi (strain ATCC 49239 / DSM 5036 / JCM 8891 / ACAM 34).